Consider the following 488-residue polypeptide: Stress activated transcription factor atfs-1 (488 aa).

Residues 1 to 23 (MFSRVGRLTTFGAQAVSNCPFRR) constitute a mitochondrion transit peptide. The segment at 138-191 (SWQNGSSVGHPHGHQQQQQTCQQPPTHSSTTETMHDFSNFGDNMGSPLFQSPSK) is disordered. The span at 142-168 (GSSVGHPHGHQQQQQTCQQPPTHSSTT) shows a compositional bias: low complexity. Lys342 participates in a covalent cross-link: Glycyl lysine isopeptide (Lys-Gly) (interchain with G-Cter in smo-1). The tract at residues 353 to 400 (QRDDDDEDYIPASEARRTSSRLNRKSATPTYLRRRDSERSWTPASDDY) is disordered. The region spanning 420-483 (DEETDRRRML…NSMKKELRKM (64 aa)) is the bZIP domain. The basic motif stretch occupies residues 425 to 460 (RRRMLNRIAAVRYREKKRAEKKGRKMEFQEVADRNR). The Nuclear localization signal signature appears at 436 to 441 (RYREKK). The tract at residues 462–469 (LLQKERQL) is leucine-zipper.

Belongs to the bZIP family. Post-translationally, may be desumoylated by ulp-4. In terms of tissue distribution, ubiquitously expressed.

The protein localises to the mitochondrion matrix. Its subcellular location is the cytoplasm. It localises to the nucleus. In terms of biological role, acts as a transcription factor during mitochondrial stress by activating the mitochondrial unfolded protein response (mtUPR). Induces nuclear and mitochondrial gene transcription, including genes coding for mitochondrial chaperones and proteins involved in glycolysis, amino acid catabolism and innate immunity. Following mitochondrial stress, restores mitochondrial respiratory capacity by limiting the transcription of oxidative phosphorylation (OXPHOS) machinery genes and by promoting the assembly of OXPHOS complexes via the up-regulation of chaperone and assembly factor genes. Component of a feedback loop involving atfs-1, atgl-1 and hlh-11. Acts together with flp-7 to negatively regulate the expression of the transcription regulator hlh-11, to promote expression of atgl-1, and thus atgl-1-dependent fat oxidation in response to mitochondrial stress. In addition, functions with hlh-11 to maintain lifespan. Promotes mtDNA maintenance and propagation of deleterious mtDNA. The sequence is that of Stress activated transcription factor atfs-1 from Caenorhabditis elegans.